Consider the following 136-residue polypeptide: C-type natriuretic peptide prohormone (136 aa).

The signal sequence occupies residues 1-21 (MSGQTSFYCGLLLVLLIQAQA). An intrachain disulfide couples cysteine 120 to cysteine 136.

The protein belongs to the natriuretic peptide family. In terms of tissue distribution, CNP-115 is differentially processed to produce CNP-38 and CNP-39 in the heart and CNP-22 in the brain.

Its subcellular location is the secreted. In terms of biological role, hormone which may be vasoactive and natriuretic. Has a cGMP-stimulating activity. The polypeptide is C-type natriuretic peptide prohormone (Triakis scyllium (Banded houndshark)).